Reading from the N-terminus, the 502-residue chain is Cyanidin 3-O-glucoside 5-O-glucosyltransferase (acyl-glucose) (502 aa).

A signal peptide spans 1-30 (MNMSCKFEIVLLVSWWLLLVLVFGVESSMF). Asn-2 carries N-linked (GlcNAc...) asparagine glycosylation. A beta-D-glucoside-binding positions include Gln-52, His-150, and 196–197 (NE). Catalysis depends on Glu-197, which acts as the Proton donor. A glycan (N-linked (GlcNAc...) asparagine) is linked at Asn-303. A beta-D-glucoside is bound by residues Tyr-320 and Glu-388. Glu-388 acts as the Nucleophile in catalysis. N-linked (GlcNAc...) asparagine glycosylation is present at Asn-425. 2 residues coordinate a beta-D-glucoside: Trp-435 and Phe-451.

Belongs to the glycosyl hydrolase 1 family. In terms of tissue distribution, expressed in petals.

Its subcellular location is the vacuole. The catalysed reaction is cyanidin 3-O-beta-D-glucoside + 1-O-(trans-sinapoyl)-beta-D-glucose = cyanidin 3,5-di-O-beta-D-glucoside + (E)-sinapate. It participates in pigment biosynthesis; anthocyanin biosynthesis. In terms of biological role, beta-glycosidase that catalyzes the transfer of glucose moiety to anthocyanidin 3-glucoside at the 5 position. Anthocyanins are ubiquitous colored pigments that are responsible for variations in petal color. Uses acyl-glucoses, but not UDP-glucose, as the glucose donor. This is Cyanidin 3-O-glucoside 5-O-glucosyltransferase (acyl-glucose) (AA5GT) from Dianthus caryophyllus (Carnation).